We begin with the raw amino-acid sequence, 859 residues long: Ubiquitin carboxyl-terminal hydrolase 23 (859 aa).

The segment covering 1 to 24 (MEVATSSTEITIQTDRDPSSNNNG) has biased composition (polar residues). The segment at 1–26 (MEVATSSTEITIQTDRDPSSNNNGSC) is disordered. In terms of domain architecture, USP spans 107-410 (AGLQNLGNTC…KAYMLFYVRD (304 aa)). Cys116 (nucleophile) is an active-site residue. Residue His369 is the Proton acceptor of the active site. Disordered stretches follow at residues 722-749 (MISS…ASQN) and 822-859 (EESY…AYRI).

Belongs to the peptidase C19 family.

It carries out the reaction Thiol-dependent hydrolysis of ester, thioester, amide, peptide and isopeptide bonds formed by the C-terminal Gly of ubiquitin (a 76-residue protein attached to proteins as an intracellular targeting signal).. Functionally, recognizes and hydrolyzes the peptide bond at the C-terminal Gly of ubiquitin. Involved in the processing of poly-ubiquitin precursors as well as that of ubiquitinated proteins. This is Ubiquitin carboxyl-terminal hydrolase 23 (UBP23) from Arabidopsis thaliana (Mouse-ear cress).